The following is a 138-amino-acid chain: Large ribosomal subunit protein mL43 (138 aa).

The protein belongs to the mitochondrion-specific ribosomal protein mL43 family. Component of the mitochondrial large ribosomal subunit (mt-LSU). Mature N.crassa 74S mitochondrial ribosomes consist of a small (37S) and a large (54S) subunit. The 37S small subunit contains a 16S ribosomal RNA (16S mt-rRNA) and 32 different proteins. The 54S large subunit contains a 23S rRNA (23S mt-rRNA) and 42 different proteins.

Its subcellular location is the mitochondrion. In terms of biological role, component of the mitochondrial ribosome (mitoribosome), a dedicated translation machinery responsible for the synthesis of mitochondrial genome-encoded proteins, including at least some of the essential transmembrane subunits of the mitochondrial respiratory chain. The mitoribosomes are attached to the mitochondrial inner membrane and translation products are cotranslationally integrated into the membrane. The protein is Large ribosomal subunit protein mL43 (mrpl51) of Neurospora crassa (strain ATCC 24698 / 74-OR23-1A / CBS 708.71 / DSM 1257 / FGSC 987).